A 281-amino-acid polypeptide reads, in one-letter code: Elongation factor Ts (281 aa).

Residues 80 to 83 (TDFV) form an involved in Mg(2+) ion dislocation from EF-Tu region.

The protein belongs to the EF-Ts family.

It localises to the cytoplasm. Its function is as follows. Associates with the EF-Tu.GDP complex and induces the exchange of GDP to GTP. It remains bound to the aminoacyl-tRNA.EF-Tu.GTP complex up to the GTP hydrolysis stage on the ribosome. The sequence is that of Elongation factor Ts from Vibrio atlanticus (strain LGP32) (Vibrio splendidus (strain Mel32)).